Here is a 368-residue protein sequence, read N- to C-terminus: uncharacterized protein (368 aa).

The N-terminal stretch at 1–19 (MHVSMIIFVSIFSIKYIMA) is a signal peptide. Residues Asn99, Asn170, Asn266, and Asn295 are each glycosylated (N-linked (GlcNAc...) asparagine; by host).

This is an uncharacterized protein from Ostreid herpesvirus 1 (isolate France) (OsHV-1).